Here is a 150-residue protein sequence, read N- to C-terminus: Small ribosomal subunit protein uS13 (150 aa).

Belongs to the universal ribosomal protein uS13 family. In terms of assembly, part of the 30S ribosomal subunit. Forms a loose heterodimer with protein S19. Forms two bridges to the 50S subunit in the 70S ribosome.

Located at the top of the head of the 30S subunit, it contacts several helices of the 16S rRNA. In the 70S ribosome it contacts the 23S rRNA (bridge B1a) and protein L5 of the 50S subunit (bridge B1b), connecting the 2 subunits; these bridges are implicated in subunit movement. This chain is Small ribosomal subunit protein uS13, found in Aeropyrum pernix (strain ATCC 700893 / DSM 11879 / JCM 9820 / NBRC 100138 / K1).